A 251-amino-acid chain; its full sequence is Aliphatic sulfonates import ATP-binding protein SsuB (251 aa).

Residues 19-238 (GELRHVDKWY…PGEPGAHTER (220 aa)) enclose the ABC transporter domain. 51–58 (GRSGSGKS) provides a ligand contact to ATP.

Belongs to the ABC transporter superfamily. Aliphatic sulfonates importer (TC 3.A.1.17.2) family. In terms of assembly, the complex is composed of two ATP-binding proteins (SsuB), two transmembrane proteins (SsuC) and a solute-binding protein (SsuA).

It is found in the cell membrane. The enzyme catalyses ATP + H2O + aliphatic sulfonate-[sulfonate-binding protein]Side 1 = ADP + phosphate + aliphatic sulfonateSide 2 + [sulfonate-binding protein]Side 1.. Its function is as follows. Part of the ABC transporter complex SsuABC involved in aliphatic sulfonates import. Responsible for energy coupling to the transport system. The protein is Aliphatic sulfonates import ATP-binding protein SsuB of Mycobacterium avium (strain 104).